A 114-amino-acid polypeptide reads, in one-letter code: Pole-localizer protein TmaR (114 aa).

Residues 70-111 (RDDYESRVDDYTIRNAELSKQRREASTKMKEQKKAHAELLKN) adopt a coiled-coil conformation. A disordered region spans residues 89–114 (KQRREASTKMKEQKKAHAELLKNAEK).

This sequence belongs to the pole-localizer TmaR family.

It localises to the cytoplasm. Functionally, pole-localizer protein involved in the regulation of several cellular processes. The protein is Pole-localizer protein TmaR of Haemophilus influenzae (strain 86-028NP).